Here is a 161-residue protein sequence, read N- to C-terminus: Calmodulin-like protein (161 aa).

4 EF-hand domains span residues 21-56 (EEID…LGQN), 57-92 (PTEQ…MMKE), 93-128 (TDSE…MGMQ), and 129-161 (FSEE…MSNQ). The Ca(2+) site is built by aspartate 34, aspartate 36, asparagine 38, threonine 40, glutamate 45, aspartate 70, aspartate 72, asparagine 74, glutamine 76, glutamate 81, aspartate 106, aspartate 108, asparagine 110, glutamate 117, aspartate 142, aspartate 144, aspartate 146, glutamate 148, and glutamate 153.

This sequence belongs to the calmodulin family.

Its function is as follows. This protein resembles calmodulin in sequence but possibly resembles troponin C in function. In Caenorhabditis elegans, this protein is Calmodulin-like protein (cal-1).